The chain runs to 277 residues: Large ribosomal subunit protein uL2m (277 aa).

The segment at 225–263 is disordered; the sequence is AMNPVDHPHGGGEGKTSGGRPSVTPWSWPTKGQPTRSKR. Over residues 248–259 the composition is skewed to polar residues; sequence TPWSWPTKGQPT.

It belongs to the universal ribosomal protein uL2 family.

The protein localises to the mitochondrion. This Reclinomonas americana protein is Large ribosomal subunit protein uL2m (RPL2).